Reading from the N-terminus, the 355-residue chain is GTPase Obg (355 aa).

Residues 1–159 (MKLVDEAEIL…RLLKLELKLL (159 aa)) form the Obg domain. The region spanning 160–342 (ADVGLLGFPN…IMKDVMAFFD (183 aa)) is the OBG-type G domain. Residues 166–173 (GFPNAGKS), 191–195 (FTTLY), 213–216 (DVPG), 292–295 (NKAD), and 323–325 (SAL) each bind GTP. Mg(2+) contacts are provided by S173 and T193.

The protein belongs to the TRAFAC class OBG-HflX-like GTPase superfamily. OBG GTPase family. Monomer. Mg(2+) is required as a cofactor.

It is found in the cytoplasm. Its function is as follows. An essential GTPase which binds GTP, GDP and possibly (p)ppGpp with moderate affinity, with high nucleotide exchange rates and a fairly low GTP hydrolysis rate. Plays a role in control of the cell cycle, stress response, ribosome biogenesis and in those bacteria that undergo differentiation, in morphogenesis control. The chain is GTPase Obg from Xanthomonas axonopodis pv. citri (strain 306).